The chain runs to 401 residues: L-rhamnonate dehydratase (401 aa).

The substrate site is built by His29 and Arg55. 3 residues coordinate Mg(2+): Asp222, Glu248, and Glu276. His325 functions as the Proton acceptor in the catalytic mechanism. Glu345 contacts substrate.

This sequence belongs to the mandelate racemase/muconate lactonizing enzyme family. RhamD subfamily. Homooctamer; tetramer of dimers. Mg(2+) serves as cofactor.

It carries out the reaction L-rhamnonate = 2-dehydro-3-deoxy-L-rhamnonate + H2O. Its function is as follows. Catalyzes the dehydration of L-rhamnonate to 2-keto-3-deoxy-L-rhamnonate (KDR). This chain is L-rhamnonate dehydratase, found in Klebsiella pneumoniae subsp. pneumoniae (strain ATCC 700721 / MGH 78578).